We begin with the raw amino-acid sequence, 134 residues long: Large-conductance mechanosensitive channel (134 aa).

2 helical membrane passes run 16–36 and 81–101; these read VIDL…VTAL and GDFI…FIIV.

It belongs to the MscL family. Homopentamer.

The protein localises to the cell inner membrane. Its function is as follows. Channel that opens in response to stretch forces in the membrane lipid bilayer. May participate in the regulation of osmotic pressure changes within the cell. The protein is Large-conductance mechanosensitive channel of Xylella fastidiosa (strain Temecula1 / ATCC 700964).